The primary structure comprises 802 residues: Acetyl-CoA decarbonylase/synthase complex subunit alpha 1 (802 aa).

4 residues coordinate [4Fe-4S] cluster: Cys68, Cys71, Cys76, and Cys86. Position 109 (His109) interacts with CO. 3 residues coordinate [Ni-4Fe-4S] cluster: His243, Cys271, and Cys310. 2 4Fe-4S ferredoxin-type domains span residues 395–424 (DEALMEEINKCTQCMNCVFTCPHSLRVDQG) and 435–464 (SKLAQLEEQCLACMKCEQACPKNIKIINVI). The [4Fe-4S] cluster site is built by Cys405, Cys408, Cys411, Cys415, Cys444, Cys447, Cys450, and Cys454. The [Ni-4Fe-4S] cluster site is built by Cys512, Cys541, and Cys576.

It belongs to the Ni-containing carbon monoxide dehydrogenase family. Heterotetramer of two alpha and two epsilon subunits. The ACDS complex is made up of alpha, epsilon, beta, gamma and delta subunits with a probable stoichiometry of (alpha(2)epsilon(2))(4)-beta(8)-(gamma(1)delta(1))(8). Requires [4Fe-4S] cluster as cofactor. It depends on [Ni-4Fe-4S] cluster as a cofactor.

The catalysed reaction is CO + 2 oxidized [2Fe-2S]-[ferredoxin] + H2O = 2 reduced [2Fe-2S]-[ferredoxin] + CO2 + 2 H(+). Part of the ACDS complex that catalyzes the reversible cleavage of acetyl-CoA, allowing autotrophic growth from CO(2). The alpha-epsilon subcomponent functions as a carbon monoxide dehydrogenase. This is Acetyl-CoA decarbonylase/synthase complex subunit alpha 1 from Archaeoglobus fulgidus (strain ATCC 49558 / DSM 4304 / JCM 9628 / NBRC 100126 / VC-16).